Reading from the N-terminus, the 251-residue chain is Astacin (251 aa).

Residues 1–15 (MQCAVLLVLLGVVAA) form the signal peptide. Residues 16 to 49 (SPIIPEAARALYYNDGMFEGDIKLRAGRQPARVG) constitute a propeptide, activation peptide. One can recognise a Peptidase M12A domain in the interval 50-248 (AAILGDEYLW…INNLYTNECS (199 aa)). 2 disulfides stabilise this stretch: C91-C247 and C113-C133. Zn(2+) is bound at residue H141. E142 is a catalytic residue. Zn(2+)-binding residues include H145 and H151. A propeptide spanning residues 250–251 (RH) is cleaved from the precursor.

In terms of assembly, monomer. Zn(2+) is required as a cofactor.

The catalysed reaction is Hydrolysis of peptide bonds in substrates containing five or more amino acids, preferentially with Ala in P1', and Pro in P2'.. Functionally, metalloprotease. This protease prefers to cleave in front of small aliphatic residues (P1'). The presence of Lys or Arg in the P1 and P2 position yields high-turnover substrates. In the P3 position the enzyme prefers Pro &gt; Val &gt; Leu &gt; Ala &gt; Gly. The chain is Astacin from Astacus astacus (Noble crayfish).